The following is a 397-amino-acid chain: Elongation factor Tu (397 aa).

The region spanning 10-206 (KPHVNIGTIG…AVDENVPDPE (197 aa)) is the tr-type G domain. Positions 19-26 (GHVDHGKT) are G1. Residue 19 to 26 (GHVDHGKT) participates in GTP binding. Residue Thr26 coordinates Mg(2+). The G2 stretch occupies residues 62-66 (GITIQ). The segment at 83-86 (DAPG) is G3. Residues 83–87 (DAPGH) and 138–141 (NKAD) each bind GTP. The segment at 138–141 (NKAD) is G4. Residues 176-178 (SAL) are G5.

This sequence belongs to the TRAFAC class translation factor GTPase superfamily. Classic translation factor GTPase family. EF-Tu/EF-1A subfamily. As to quaternary structure, monomer.

Its subcellular location is the cytoplasm. It catalyses the reaction GTP + H2O = GDP + phosphate + H(+). GTP hydrolase that promotes the GTP-dependent binding of aminoacyl-tRNA to the A-site of ribosomes during protein biosynthesis. The polypeptide is Elongation factor Tu (Saccharopolyspora erythraea (strain ATCC 11635 / DSM 40517 / JCM 4748 / NBRC 13426 / NCIMB 8594 / NRRL 2338)).